The chain runs to 202 residues: Crustacean calcium-binding protein 23 (202 aa).

Position 1 is an N-acetylserine (Ser1). EF-hand domains are found at residues 33–68 (SGLL…FGLD), 69–104 (LSDG…EMTE), 105–140 (PRKK…KTHP), and 148–185 (TEDE…LSKA). Positions 84, 93, 118, 122, and 129 each coordinate Ca(2+).

In terms of assembly, monomer or disulfide-linked dimers. In terms of tissue distribution, striated muscle and brain.

In terms of biological role, possibly acts as a regulatory protein and not as a calcium buffer or transport protein. This is Crustacean calcium-binding protein 23 from Faxonius limosus (Spinycheek crayfish).